Reading from the N-terminus, the 143-residue chain is Beta/delta-urticatoxin-Uf2b (143 aa).

The N-terminal stretch at 1–18 (MGAIVLVALMALVASSSA) is a signal peptide. The propeptide occupies 19-80 (FSDIEHNIMK…MMLSGRPQPN (62 aa)). 6 cysteine pairs are disulfide-bonded: Cys-83/Cys-100, Cys-90/Cys-105, Cys-99/Cys-113, Cys-115/Cys-129, Cys-122/Cys-134, and Cys-128/Cys-142.

It belongs to the urticatoxin-2 family. In terms of tissue distribution, expressed in trichomes, that are stiff epidermal hairs located on the surface of petioles and leaves.

It localises to the secreted. In terms of biological role, plant defense neurotoxin that causes pain and systemic symptoms in mammals via modulation of voltage-gated sodium channels (Nav). Potent modulator of human Nav1.5/SCN5A (EC(50)=55 nM), Nav1.6/SCN8A (EC(50)=0.86 nM), and Nav1.7/SCN9A (EC(50)=208 nM), where it shifts the activation threshold to more negative potentials and delays fast inactivation. Also shifts the voltage-dependence of steady-state fast inactivation of Nav1.6/SCN8A, but not that of Nav1.5/SCN5A or Nav1.7/SCN9A. On Nav1.7/SCN9A, principally acts by binding to extracellular loops of domain IV (Nav site 3). In vivo, intraplantar injection into mice causes numerous dose-dependent, immediate, and long-lasting spontaneous pain behaviors, while no swelling is observed in the injected paw. At the highest doses tested, systemic symptoms including hypokinesia and hypersalivation are observed. The polypeptide is Beta/delta-urticatoxin-Uf2b (Urtica ferox (Tree nettle)).